Consider the following 400-residue polypeptide: CinA-like protein (400 aa).

This sequence belongs to the CinA family.

The chain is CinA-like protein from Escherichia coli (strain 55989 / EAEC).